A 210-amino-acid polypeptide reads, in one-letter code: Urease accessory protein UreE (210 aa).

A disordered region spans residues 144–210 (PEGGAYAAGG…GHAHPHSLAR (67 aa)). The span at 156–202 (HGHDHPHHDHGHDHAHAHAHGTEACDHEHSHDHDCGHHHDHGQDYGH) shows a compositional bias: basic and acidic residues.

Belongs to the UreE family.

It localises to the cytoplasm. Functionally, involved in urease metallocenter assembly. Binds nickel. Probably functions as a nickel donor during metallocenter assembly. This chain is Urease accessory protein UreE, found in Paracidovorax citrulli (strain AAC00-1) (Acidovorax citrulli).